The sequence spans 294 residues: Protein huluwa (294 aa).

Topologically, residues 1–23 are extracellular; the sequence is MSQLGSAVPSSNLPEGLPVSSLA. Residues 24 to 44 traverse the membrane as a helical segment; the sequence is LLILVLIPCVLLLLLLNCLFV. At 45 to 294 the chain is on the cytoplasmic side; that stretch reads GYKLFRMTRR…PPITTKQYWV (250 aa). The disordered stretch occupies residues 154 to 175; it reads SDSDMERVNTVPPNSPVLRVTP. The VPPNSP motif signature appears at 164-169; it reads VPPNSP. The SLRRSST motif motif lies at 184–190; that stretch reads SLRRSST.

This sequence belongs to the huluwa family. As to quaternary structure, interacts with axin1; leading to promote the tankyrase-mediated degradation of axin. Interacts with axin2; leading to promote the tankyrase-mediated degradation of axin.

Its subcellular location is the cell membrane. Key maternal determinant of the dorsal organizer and body axis formation in vertebrates that acts by promoting stabilization of beta-catenin (ctnnb1). Localizes on the plasma membrane of the future dorsal blastomeres in early blastulas and binds to and promotes the tankyrase-mediated degradation of axin (axin1 and axin2). Axin degradation results in stabilization and nuclear translocation of beta-catenin (ctnnb1) for activating organizer-specific target gene expression. The sequence is that of Protein huluwa from Danio rerio (Zebrafish).